The chain runs to 73 residues: UPF0270 protein PMI2817 (73 aa).

It belongs to the UPF0270 family.

This is UPF0270 protein PMI2817 from Proteus mirabilis (strain HI4320).